A 1370-amino-acid polypeptide reads, in one-letter code: DNA-directed RNA polymerase subunit beta (1370 aa).

This sequence belongs to the RNA polymerase beta chain family. As to quaternary structure, the RNAP catalytic core consists of 2 alpha, 1 beta, 1 beta' and 1 omega subunit. When a sigma factor is associated with the core the holoenzyme is formed, which can initiate transcription.

It catalyses the reaction RNA(n) + a ribonucleoside 5'-triphosphate = RNA(n+1) + diphosphate. In terms of biological role, DNA-dependent RNA polymerase catalyzes the transcription of DNA into RNA using the four ribonucleoside triphosphates as substrates. The polypeptide is DNA-directed RNA polymerase subunit beta (Bordetella pertussis (strain Tohama I / ATCC BAA-589 / NCTC 13251)).